The chain runs to 154 residues: 6,7-dimethyl-8-ribityllumazine synthase (154 aa).

5-amino-6-(D-ribitylamino)uracil contacts are provided by residues Phe22, 56-58 (SFE), and 81-83 (VLI). 86–87 (ET) contributes to the (2S)-2-hydroxy-3-oxobutyl phosphate binding site. The active-site Proton donor is the His89. 5-amino-6-(D-ribitylamino)uracil is bound at residue Phe114. A (2S)-2-hydroxy-3-oxobutyl phosphate-binding site is contributed by Arg128.

Belongs to the DMRL synthase family.

The catalysed reaction is (2S)-2-hydroxy-3-oxobutyl phosphate + 5-amino-6-(D-ribitylamino)uracil = 6,7-dimethyl-8-(1-D-ribityl)lumazine + phosphate + 2 H2O + H(+). The protein operates within cofactor biosynthesis; riboflavin biosynthesis; riboflavin from 2-hydroxy-3-oxobutyl phosphate and 5-amino-6-(D-ribitylamino)uracil: step 1/2. In terms of biological role, catalyzes the formation of 6,7-dimethyl-8-ribityllumazine by condensation of 5-amino-6-(D-ribitylamino)uracil with 3,4-dihydroxy-2-butanone 4-phosphate. This is the penultimate step in the biosynthesis of riboflavin. The protein is 6,7-dimethyl-8-ribityllumazine synthase of Chlamydia felis (strain Fe/C-56) (Chlamydophila felis).